Here is a 215-residue protein sequence, read N- to C-terminus: Large ribosomal subunit protein uL3 (215 aa).

The interval 124–164 (KRHGFSRGPMTHGSKNHREPGSTGAGTTPGRIYPGKRMAGR) is disordered.

Belongs to the universal ribosomal protein uL3 family. In terms of assembly, part of the 50S ribosomal subunit. Forms a cluster with proteins L14 and L19.

In terms of biological role, one of the primary rRNA binding proteins, it binds directly near the 3'-end of the 23S rRNA, where it nucleates assembly of the 50S subunit. The sequence is that of Large ribosomal subunit protein uL3 from Synechococcus sp. (strain RCC307).